Here is a 390-residue protein sequence, read N- to C-terminus: LL-diaminopimelate aminotransferase (390 aa).

Residues Tyr13, Gly38, Lys102, Tyr126, and Asn176 each contribute to the substrate site. Pyridoxal 5'-phosphate-binding positions include 101 to 102, Tyr126, Asn176, Tyr207, and 235 to 237; these read SK and SVS. N6-(pyridoxal phosphate)lysine is present on Lys238. Arg246 lines the pyridoxal 5'-phosphate pocket. Substrate is bound at residue Arg364.

The protein belongs to the class-I pyridoxal-phosphate-dependent aminotransferase family. LL-diaminopimelate aminotransferase subfamily. Homodimer. Requires pyridoxal 5'-phosphate as cofactor.

The catalysed reaction is (2S,6S)-2,6-diaminopimelate + 2-oxoglutarate = (S)-2,3,4,5-tetrahydrodipicolinate + L-glutamate + H2O + H(+). Its pathway is amino-acid biosynthesis; L-lysine biosynthesis via DAP pathway; LL-2,6-diaminopimelate from (S)-tetrahydrodipicolinate (aminotransferase route): step 1/1. Involved in the synthesis of meso-diaminopimelate (m-DAP or DL-DAP), required for both lysine and peptidoglycan biosynthesis. Catalyzes the direct conversion of tetrahydrodipicolinate to LL-diaminopimelate. Is also able to catalyze the reverse reaction in vitro, i.e. the transamination of LL-diaminopimelate with 2-oxoglutarate to produce tetrahydrodipicolinate and glutamate. Can also use m-DAP instead of LL-DAP as the amino-group donor, and oxaloacetate instead of 2-oxoglutarate as the amino-group acceptor. This chain is LL-diaminopimelate aminotransferase, found in Moorella thermoacetica (strain ATCC 39073 / JCM 9320).